A 475-amino-acid chain; its full sequence is uncharacterized protein (475 aa).

A helical membrane pass occupies residues 19–39 (IKVGVFFVAILLILTGILLTI). Disordered stretches follow at residues 55 to 79 (GEYH…NATS) and 330 to 350 (SSPF…PHKG). Over residues 60-79 (LNTSPNENSTALQPDENATS) the composition is skewed to polar residues. A compositionally biased stretch (basic residues) spans 336-348 (NRRHPVTGRIRPH). Position 348 (H348) interacts with Zn(2+).

The protein in the central section; belongs to the OapA family. This sequence in the C-terminal section; belongs to the peptidase M23B family. Requires Zn(2+) as cofactor.

It is found in the cell membrane. This is an uncharacterized protein from Haemophilus influenzae (strain ATCC 51907 / DSM 11121 / KW20 / Rd).